The chain runs to 195 residues: MEAFTIHTGRAVPLRRSDVDTDQIIPSEWLKRIERTGFGAGLFSEWRADPSFVLNDPAHAGASILLAGPDFGTGSSREHAVWALQDYGFRAVLSPRFADIFRGNALGNGLLPVVLPADTVEALTAAVEADPTTEITVDLVAREVRGAGQVAGFELDDFTRWRLMEGLDDVGLTLRHEQDITVFEASRPGWLPTTA.

This sequence belongs to the LeuD family. LeuD type 1 subfamily. Heterodimer of LeuC and LeuD.

The catalysed reaction is (2R,3S)-3-isopropylmalate = (2S)-2-isopropylmalate. It functions in the pathway amino-acid biosynthesis; L-leucine biosynthesis; L-leucine from 3-methyl-2-oxobutanoate: step 2/4. Functionally, catalyzes the isomerization between 2-isopropylmalate and 3-isopropylmalate, via the formation of 2-isopropylmaleate. The sequence is that of 3-isopropylmalate dehydratase small subunit from Parafrankia sp. (strain EAN1pec).